The chain runs to 100 residues: Small ribosomal subunit protein uS14c (100 aa).

Residues 1-10 are compositionally biased toward basic and acidic residues; that stretch reads MARKGLIERE. Positions 1–29 are disordered; it reads MARKGLIEREKKRKKLEQKYHSIRGSSKK.

This sequence belongs to the universal ribosomal protein uS14 family. Part of the 30S ribosomal subunit.

Its subcellular location is the plastid. The protein resides in the chloroplast. Its function is as follows. Binds 16S rRNA, required for the assembly of 30S particles. The protein is Small ribosomal subunit protein uS14c of Acorus calamus (Sweet flag).